The following is a 395-amino-acid chain: Putative 8-amino-7-oxononanoate synthase (395 aa).

Substrate is bound at residue Arg23. 110-111 (GY) is a pyridoxal 5'-phosphate binding site. His135 provides a ligand contact to substrate. Pyridoxal 5'-phosphate-binding positions include Ser182, 207–210 (DEAH), and 239–242 (TFSK). Lys242 bears the N6-(pyridoxal phosphate)lysine mark. Thr356 provides a ligand contact to substrate.

It belongs to the class-II pyridoxal-phosphate-dependent aminotransferase family. BioF subfamily. As to quaternary structure, homodimer. It depends on pyridoxal 5'-phosphate as a cofactor.

It catalyses the reaction 6-carboxyhexanoyl-[ACP] + L-alanine + H(+) = (8S)-8-amino-7-oxononanoate + holo-[ACP] + CO2. Its pathway is cofactor biosynthesis; biotin biosynthesis. Its function is as follows. Catalyzes the decarboxylative condensation of pimeloyl-[acyl-carrier protein] and L-alanine to produce 8-amino-7-oxononanoate (AON), [acyl-carrier protein], and carbon dioxide. This is Putative 8-amino-7-oxononanoate synthase (bioF) from Bacillus cereus (strain ATCC 10987 / NRS 248).